The chain runs to 260 residues: Purine nucleoside phosphorylase PD_1754 (260 aa).

Residues His-79, Cys-120, and His-137 each coordinate Zn(2+).

The protein belongs to the purine nucleoside phosphorylase YfiH/LACC1 family. Homodimer. Cu(2+) is required as a cofactor. Requires Zn(2+) as cofactor.

The catalysed reaction is adenosine + phosphate = alpha-D-ribose 1-phosphate + adenine. The enzyme catalyses S-methyl-5'-thioadenosine + phosphate = 5-(methylsulfanyl)-alpha-D-ribose 1-phosphate + adenine. It catalyses the reaction inosine + phosphate = alpha-D-ribose 1-phosphate + hypoxanthine. It carries out the reaction adenosine + H2O + H(+) = inosine + NH4(+). In terms of biological role, purine nucleoside enzyme that catalyzes the phosphorolysis of adenosine and inosine nucleosides, yielding D-ribose 1-phosphate and the respective free bases, adenine and hypoxanthine. Also catalyzes the phosphorolysis of S-methyl-5'-thioadenosine into adenine and S-methyl-5-thio-alpha-D-ribose 1-phosphate. Also has adenosine deaminase activity. This chain is Purine nucleoside phosphorylase PD_1754, found in Xylella fastidiosa (strain Temecula1 / ATCC 700964).